The following is a 320-amino-acid chain: Small ribosomal subunit protein uS2 (320 aa).

Residues 254-320 (GDAAKAALPV…APATTGPVSE (67 aa)) are disordered. Over residues 272–282 (VSAKNEAKSDD) the composition is skewed to basic and acidic residues. Over residues 308–320 (AEAAPATTGPVSE) the composition is skewed to low complexity.

It belongs to the universal ribosomal protein uS2 family.

This is Small ribosomal subunit protein uS2 from Clavibacter sepedonicus (Clavibacter michiganensis subsp. sepedonicus).